We begin with the raw amino-acid sequence, 263 residues long: 3'-5' ssDNA/RNA exonuclease TatD (263 aa).

A divalent metal cation contacts are provided by E92, H128, and H153.

This sequence belongs to the metallo-dependent hydrolases superfamily. TatD-type hydrolase family. TatD subfamily. As to quaternary structure, monomer. Mg(2+) is required as a cofactor.

It is found in the cytoplasm. Functionally, 3'-5' exonuclease that prefers single-stranded DNA and RNA. May play a role in the H(2)O(2)-induced DNA damage repair. The chain is 3'-5' ssDNA/RNA exonuclease TatD from Rahnella sp. (strain Y9602).